Reading from the N-terminus, the 375-residue chain is Alcohol dehydrogenase B (375 aa).

Zn(2+) is bound by residues C40, H62, C92, C95, C98, C106, and C169.

It belongs to the zinc-containing alcohol dehydrogenase family. The cofactor is Zn(2+).

The protein localises to the cytoplasm. The catalysed reaction is a primary alcohol + NAD(+) = an aldehyde + NADH + H(+). It carries out the reaction a secondary alcohol + NAD(+) = a ketone + NADH + H(+). This is Alcohol dehydrogenase B (adhB) from Mycobacterium bovis (strain ATCC BAA-935 / AF2122/97).